Here is a 259-residue protein sequence, read N- to C-terminus: MTEAIPKGSLGSPLLTFPPLEEGVLVKRYKRFLADVELVSGEIVTAHCANTGPMTGVLHPGGRVRLRHAPSPKRKLAWTWEQAEAPSSQGGLCWVGINTALANSLIRAAIEAGHLKQVLGPIAAIRPEVTYGSNRRSRIDLLLTPDANCSDTRPIYLEVKNTTWNEHSLALFPDTVTERGQKHLKELIGVLPESRAVLVPCLSRHDVQTFAPGDSADPRYGELFRLALTAGVEVIPCCFGFHRDKITWEGLRPTKTTQS.

The protein belongs to the SfsA family.

This is Sugar fermentation stimulation protein homolog from Prochlorococcus marinus (strain MIT 9303).